The primary structure comprises 597 residues: Elongation factor 4 (597 aa).

Positions 2-184 (KHIRNFSIIA…KIVSAIPAPQ (183 aa)) constitute a tr-type G domain. GTP is bound by residues 14–19 (DHGKST) and 131–134 (NKID).

It belongs to the TRAFAC class translation factor GTPase superfamily. Classic translation factor GTPase family. LepA subfamily.

Its subcellular location is the cell inner membrane. The enzyme catalyses GTP + H2O = GDP + phosphate + H(+). In terms of biological role, required for accurate and efficient protein synthesis under certain stress conditions. May act as a fidelity factor of the translation reaction, by catalyzing a one-codon backward translocation of tRNAs on improperly translocated ribosomes. Back-translocation proceeds from a post-translocation (POST) complex to a pre-translocation (PRE) complex, thus giving elongation factor G a second chance to translocate the tRNAs correctly. Binds to ribosomes in a GTP-dependent manner. This Vibrio cholerae serotype O1 (strain ATCC 39541 / Classical Ogawa 395 / O395) protein is Elongation factor 4.